A 298-amino-acid polypeptide reads, in one-letter code: MEEKQILCVGLVVLDIINVVDKYPEEDTDRRCLSQRWQRGGNASNSCTVLSLLGARCAFMGSLAPGHVADFLVADFRQRGVDVSQVTWQSQGDTPCSCCIVNNSNGSRTIILYDTNLPDVSAKDFEKVDLTRFKWIHIEGRNASEQVKMLQRIEEHNAKQPLPQKVRVSVEIEKPREELFQLFSYGEVVFVSKDVAKHLGFQPAVEALRGLYSRVKKGATLVCAWAEEGADALGPDGQLLHSDAFPPPRVVDTLGAGDTFNASVIFSLSKGNSMQEALRFGCQVAGKKCGLQGFDGIV.

Residues D15, G41, N42, and N45 each coordinate beta-D-fructose. Residues R108, 226–229 (AEEG), and 255–258 (GAGD) contribute to the ATP site. Residue D258 participates in beta-D-fructose binding.

Belongs to the carbohydrate kinase PfkB family. In terms of assembly, homodimer.

It carries out the reaction beta-D-fructose + ATP = beta-D-fructose 1-phosphate + ADP + H(+). It participates in carbohydrate metabolism; fructose metabolism. With respect to regulation, requires potassium. Inhibition by ADP. In terms of biological role, catalyzes the phosphorylation of the ketose sugar fructose to fructose-1-phosphate. The sequence is that of Ketohexokinase from Mus musculus (Mouse).